The sequence spans 155 residues: S-ribosylhomocysteine lyase (155 aa).

3 residues coordinate Fe cation: histidine 54, histidine 58, and cysteine 122.

The protein belongs to the LuxS family. As to quaternary structure, homodimer. The cofactor is Fe cation.

The catalysed reaction is S-(5-deoxy-D-ribos-5-yl)-L-homocysteine = (S)-4,5-dihydroxypentane-2,3-dione + L-homocysteine. Its function is as follows. Involved in the synthesis of autoinducer 2 (AI-2) which is secreted by bacteria and is used to communicate both the cell density and the metabolic potential of the environment. The regulation of gene expression in response to changes in cell density is called quorum sensing. Catalyzes the transformation of S-ribosylhomocysteine (RHC) to homocysteine (HC) and 4,5-dihydroxy-2,3-pentadione (DPD). The polypeptide is S-ribosylhomocysteine lyase (Deinococcus geothermalis (strain DSM 11300 / CIP 105573 / AG-3a)).